A 251-amino-acid chain; its full sequence is Early E1A protein (251 aa).

Positions 38-46 (ISLHNLFDV) are interaction with RB1 in competition with E2F1. An interaction with UBE2I region spans residues 74–136 (SADSGAASGD…NYVNIAEGAS (63 aa)). Residues 97–101 (LKCYE) carry the LXCXE motif, interaction with host RB1 and TMEM173/STING motif. Residues 102-122 (EGLPPSGSEADEAEERAEEEE) form a disordered region. Residues 110-122 (EADEAEERAEEEE) are compositionally biased toward acidic residues. Residues 150-170 (CRACDFHRGSSGNPEAMCALC) fold into a zinc finger. Positions 240 to 244 (PLNLS) match the PXDLS motif, CTBP-binding motif. Residues 246–250 (KRPKS) carry the Nuclear localization signal motif.

The protein belongs to the adenoviridae E1A protein family. As to quaternary structure, interacts with host UBE2I; this interaction interferes with polySUMOylation. Interacts with host RB1; this interaction induces the aberrant dissociation of RB1-E2F1 complex thereby disrupting the activity of RB1 and activating E2F1-regulated genes. Interacts with host ATF7; the interaction enhances ATF7-mediated viral transactivation activity which requires the zinc binding domains of both proteins. Isoform early E1A 32 kDa protein and isoform early E1A 26 kDa protein interact (via N-terminus) with CUL1 and E3 ubiquitin ligase RBX1; these interactions inhibit RBX1-CUL1-dependent elongation reaction of ubiquitin chains and attenuate ubiquitination of SCF(FBXW7) target proteins. Interacts (via PXLXP motif) with host ZMYND11/BS69 (via MYND-type zinc finger); this interaction inhibits E1A mediated transactivation. Interacts with host EP300; this interaction stimulates the acetylation of RB1 by recruiting EP300 and RB1 into a multimeric-protein complex. Interacts with host CTBP1 and CTBP2; this interaction seems to potentiate viral replication. Interacts with host DCAF7. Interacts with host DYRK1A. Interacts with host KPNA4; this interaction allows E1A import into the host nucleus. Interacts with host EP400; this interaction stabilizes MYC. Interacts with host TBP protein; this interaction probably disrupts the TBP-TATA complex. Interacts (via LXCXE motif) with host TMEM173/STING; this interaction impairs the ability of TMEM173/STING to sense cytosolic DNA and promote the production of type I interferon (IFN-alpha and IFN-beta). Interacts (via C-terminus) with host ZBED1/hDREF (via C-terminus); the interaction is direct.

It is found in the host nucleus. Its function is as follows. Plays a role in viral genome replication by driving entry of quiescent cells into the cell cycle. Stimulation of progression from G1 to S phase allows the virus to efficiently use the cellular DNA replicating machinery to achieve viral genome replication. E1A protein has both transforming and trans-activating activities. Induces the disassembly of the E2F1 transcription factor from RB1 by direct competition for the same binding site on RB1, with subsequent transcriptional activation of E2F1-regulated S-phase genes and of the E2 region of the adenoviral genome. Release of E2F1 leads to the ARF-mediated inhibition of MDM2 and causes TP53/p53 to accumulate because it is not targeted for degradation by MDM2-mediated ubiquitination anymore. This increase in TP53, in turn, would arrest the cell proliferation and direct its death but this effect is counteracted by the viral protein E1B-55K. Inactivation of the ability of RB1 to arrest the cell cycle is critical for cellular transformation, uncontrolled cellular growth and proliferation induced by viral infection. Interaction with RBX1 and CUL1 inhibits ubiquitination of the proteins targeted by SCF(FBXW7) ubiquitin ligase complex, and may be linked to unregulated host cell proliferation. The tumorigenesis-restraining activity of E1A may be related to the disruption of the host CtBP-CtIP complex through the CtBP binding motif. Interaction with host TMEM173/STING impairs the ability of TMEM173/STING to sense cytosolic DNA and promote the production of type I interferon (IFN-alpha and IFN-beta). Promotes the sumoylation of host ZBED1/hDREF with SUMO1. This Human adenovirus F serotype 41 (HAdV-41) protein is Early E1A protein.